Consider the following 178-residue polypeptide: UPF0232 protein cgR_0005 (178 aa).

The tract at residues 16–55 (AMRRNGSVPDLNKNDAFRRPPAPKGGVEKRKKGRASGLDG) is disordered.

Belongs to the UPF0232 family.

This Corynebacterium glutamicum (strain R) protein is UPF0232 protein cgR_0005.